Reading from the N-terminus, the 117-residue chain is MATYSLANERLRALEDIEREIGAILQNAGTVILELSKEKTNERLLDRQAAAFTASVQHVEAELSAQIRYLTQVATGQPHEGSSYSSRKDCQMALKRVDYARLKLSDVARTCEQMLEN.

At Ala-2 the chain carries N-acetylalanine.

It belongs to the Mediator complex subunit 11 family. In terms of assembly, component of the Mediator complex, which is composed of MED1, MED4, MED6, MED7, MED8, MED9, MED10, MED11, MED12, MED13, MED13L, MED14, MED15, MED16, MED17, MED18, MED19, MED20, MED21, MED22, MED23, MED24, MED25, MED26, MED27, MED29, MED30, MED31, CCNC, CDK8 and CDC2L6/CDK11. The MED12, MED13, CCNC and CDK8 subunits form a distinct module termed the CDK8 module. Mediator containing the CDK8 module is less active than Mediator lacking this module in supporting transcriptional activation. Individual preparations of the Mediator complex lacking one or more distinct subunits have been variously termed ARC, CRSP, DRIP, PC2, SMCC and TRAP.

The protein resides in the nucleus. In terms of biological role, component of the Mediator complex, a coactivator involved in the regulated transcription of nearly all RNA polymerase II-dependent genes. Mediator functions as a bridge to convey information from gene-specific regulatory proteins to the basal RNA polymerase II transcription machinery. Mediator is recruited to promoters by direct interactions with regulatory proteins and serves as a scaffold for theee assembly of a functional pre-initiation complex with RNA polymerase II and the general transcription factors. This Homo sapiens (Human) protein is Mediator of RNA polymerase II transcription subunit 11 (MED11).